Reading from the N-terminus, the 287-residue chain is Elongation factor Ts (287 aa).

The interval 80–83 (TDFL) is involved in Mg(2+) ion dislocation from EF-Tu.

This sequence belongs to the EF-Ts family.

It localises to the cytoplasm. In terms of biological role, associates with the EF-Tu.GDP complex and induces the exchange of GDP to GTP. It remains bound to the aminoacyl-tRNA.EF-Tu.GTP complex up to the GTP hydrolysis stage on the ribosome. In Pseudomonas putida (strain W619), this protein is Elongation factor Ts.